A 267-amino-acid polypeptide reads, in one-letter code: tRNA (guanine-N(1)-)-methyltransferase (267 aa).

S-adenosyl-L-methionine-binding positions include Gly-112 and 131–136 (IGDYIL). Residues 245–259 (DRRKEKNSYEDEFNR) are compositionally biased toward basic and acidic residues. The disordered stretch occupies residues 245–267 (DRRKEKNSYEDEFNRRNYKRSTS).

Belongs to the RNA methyltransferase TrmD family. Homodimer.

Its subcellular location is the cytoplasm. The enzyme catalyses guanosine(37) in tRNA + S-adenosyl-L-methionine = N(1)-methylguanosine(37) in tRNA + S-adenosyl-L-homocysteine + H(+). Specifically methylates guanosine-37 in various tRNAs. The protein is tRNA (guanine-N(1)-)-methyltransferase of Spiroplasma kunkelii.